Reading from the N-terminus, the 509-residue chain is Histidine--tRNA ligase, cytoplasmic (509 aa).

Position 2 is an N-acetylalanine (A2). The 57-residue stretch at 3–59 (ERAALEELVKLQGERVRGLKQQKASAELIEEEVAKLLKLKAQLGPDESKQKFVLKTP) folds into the WHEP-TRS domain. Phosphoserine is present on S66. L-histidine-binding positions include 130–132 (DLT), R157, Q173, D177, R326, and 330–331 (YY). The residue at position 356 (S356) is a Phosphoserine.

This sequence belongs to the class-II aminoacyl-tRNA synthetase family. As to quaternary structure, homodimer. In terms of tissue distribution, brain, heart, liver and kidney.

The protein resides in the cytoplasm. It carries out the reaction tRNA(His) + L-histidine + ATP = L-histidyl-tRNA(His) + AMP + diphosphate + H(+). Its function is as follows. Catalyzes the ATP-dependent ligation of histidine to the 3'-end of its cognate tRNA, via the formation of an aminoacyl-adenylate intermediate (His-AMP). Plays a role in axon guidance. The protein is Histidine--tRNA ligase, cytoplasmic of Homo sapiens (Human).